The primary structure comprises 234 residues: Large ribosomal subunit protein uL1 (234 aa).

The protein belongs to the universal ribosomal protein uL1 family. In terms of assembly, part of the 50S ribosomal subunit.

Its function is as follows. Binds directly to 23S rRNA. The L1 stalk is quite mobile in the ribosome, and is involved in E site tRNA release. In terms of biological role, protein L1 is also a translational repressor protein, it controls the translation of the L11 operon by binding to its mRNA. The protein is Large ribosomal subunit protein uL1 of Anaeromyxobacter dehalogenans (strain 2CP-1 / ATCC BAA-258).